The primary structure comprises 473 residues: Photosystem II CP43 reaction center protein (473 aa).

The propeptide occupies 1-14 (MKTLYSLRRFYHVE). The residue at position 15 (Thr15) is an N-acetylthreonine. At Thr15 the chain carries Phosphothreonine. A run of 5 helical transmembrane segments spans residues 69 to 93 (LFEV…PHLA), 134 to 155 (LLGP…KDRN), 178 to 200 (KALY…RKIT), 255 to 275 (KPFA…LSYS), and 291 to 312 (WFNN…ASQA). A [CaMn4O5] cluster-binding site is contributed by Glu367. The helical transmembrane segment at 447-471 (RARAAAAGFEKGIDRDFEPVLFMTP) threads the bilayer.

Belongs to the PsbB/PsbC family. PsbC subfamily. As to quaternary structure, PSII is composed of 1 copy each of membrane proteins PsbA, PsbB, PsbC, PsbD, PsbE, PsbF, PsbH, PsbI, PsbJ, PsbK, PsbL, PsbM, PsbT, PsbX, PsbY, PsbZ, Psb30/Ycf12, at least 3 peripheral proteins of the oxygen-evolving complex and a large number of cofactors. It forms dimeric complexes. Binds multiple chlorophylls and provides some of the ligands for the Ca-4Mn-5O cluster of the oxygen-evolving complex. It may also provide a ligand for a Cl- that is required for oxygen evolution. PSII binds additional chlorophylls, carotenoids and specific lipids. is required as a cofactor.

Its subcellular location is the plastid. The protein localises to the chloroplast thylakoid membrane. Functionally, one of the components of the core complex of photosystem II (PSII). It binds chlorophyll and helps catalyze the primary light-induced photochemical processes of PSII. PSII is a light-driven water:plastoquinone oxidoreductase, using light energy to abstract electrons from H(2)O, generating O(2) and a proton gradient subsequently used for ATP formation. This chain is Photosystem II CP43 reaction center protein, found in Solanum tuberosum (Potato).